Here is a 341-residue protein sequence, read N- to C-terminus: Fructose-1,6-bisphosphatase, cytosolic (341 aa).

Mg(2+)-binding residues include Glu-71, Glu-100, Asp-121, Leu-123, and Asp-124. Substrate-binding positions include 124–127, Asn-215, Tyr-247, Tyr-267, and Lys-277; that span reads DGSS. Position 283 (Glu-283) interacts with Mg(2+).

It belongs to the FBPase class 1 family. Requires Mg(2+) as cofactor.

The protein resides in the cytoplasm. It is found in the nucleus. The enzyme catalyses beta-D-fructose 1,6-bisphosphate + H2O = beta-D-fructose 6-phosphate + phosphate. Its function is as follows. Catalyzes the first irreversible reaction from fructose-1,6-bisphosphate to fructose-6-phosphate and inorganic phosphate and plays an important regulatory role in sucrose biosynthesis and metabolism. Its activity is essential to regulate starch levels. Functions in fructose-mediated signaling independently of its catalytic activity in sugar metabolism. May act downstream of ABA2/GIN1, which is involved in abscisic acid (ABA) synthesis to regulate autotrophic transition and modulate early seedling establishment after seed germination. The polypeptide is Fructose-1,6-bisphosphatase, cytosolic (Arabidopsis thaliana (Mouse-ear cress)).